A 730-amino-acid polypeptide reads, in one-letter code: PWWP domain-containing protein 2A (730 aa).

Residues 1 to 15 (MAAVAAEAAATAASP) are compositionally biased toward low complexity. The disordered stretch occupies residues 1–134 (MAAVAAEAAA…PPAGGDSAVS (134 aa)). The span at 66–77 (PLPPPPPPPPPG) shows a compositional bias: pro residues. 2 positions are modified to phosphoserine: Ser82 and Ser99. A compositionally biased stretch (pro residues) spans 91-108 (PEPAAVPVSPPEQPPAAP). The tract at residues 128–346 (GGDSAVSHLI…KLKTDHKVDG (219 aa)) is interaction with HDAC1 and MTA1. Residue Lys188 forms a Glycyl lysine isopeptide (Lys-Gly) (interchain with G-Cter in SUMO2) linkage. Disordered stretches follow at residues 257 to 276 (YNQS…KRKM), 311 to 355 (IRKG…SQRR), and 409 to 531 (KEKA…LGKK). Over residues 267–276 (RKIKRPKRKM) the composition is skewed to basic residues. Composition is skewed to basic and acidic residues over residues 311–329 (IRKG…RRND) and 341–354 (DHKV…ESQR). Residues 396-547 (MDHAKAREVL…SVYLTLNQET (152 aa)) are interaction with the H2A.Z/H2AZ1. The segment covering 488–501 (SAGEAPSEKPSPSE) has biased composition (low complexity). Positions 512-527 (DTSRVRVPGEQEELRM) are enriched in basic and acidic residues. One can recognise a PWWP domain in the interval 630-690 (VGDIVWAKIY…LSQLSPFLEN (61 aa)).

As to quaternary structure, component of a MTA1-specific subcomplex of the NuRD complex (M1HR), which is composed of PWWP2A, MTA1/2, HDAC1/2, and RBBP4/7 but does not contain CHD4 and MBD3. Interacts with MTA1; the interaction mediates the association of PWWP2A with the M1HR complex. Interacts with H2A.Z/H2AZ1. Interacts (via PWWP domain) with histone H3 trimethylated at 'Lys-36' (H3K36me3). Does not interact with CHD4 and MBD3.

The protein resides in the nucleus. Its function is as follows. Chromatin-binding protein that acts as an adapter between distinct nucleosome components (H3K36me3 or H2A.Z) and chromatin-modifying complexes, contributing to the regulation of the levels of histone acetylation at actively transcribed genes. Competes with CHD4 and MBD3 for interaction with MTA1 to form a NuRD subcomplex, preventing the formation of full NuRD complex (containing CHD4 and MBD3), leading to recruitment of HDACs to gene promoters resulting in turn in the deacetylation of nearby H3K27 and H2A.Z. Plays a role in facilitating transcriptional elongation and repression of spurious transcription initiation through regulation of histone acetylation. Essential for proper mitosis progression. The polypeptide is PWWP domain-containing protein 2A (Pwwp2a) (Mus musculus (Mouse)).